We begin with the raw amino-acid sequence, 441 residues long: BTB/POZ domain-containing protein At4g30940 (441 aa).

Positions 6–74 constitute a BTB domain; sequence DRIKFNVGGR…LRTGDLNIPP (69 aa).

Its pathway is protein modification; protein ubiquitination. May act as a substrate-specific adapter of an E3 ubiquitin-protein ligase complex (CUL3-RBX1-BTB) which mediates the ubiquitination and subsequent proteasomal degradation of target proteins. This chain is BTB/POZ domain-containing protein At4g30940, found in Arabidopsis thaliana (Mouse-ear cress).